Consider the following 390-residue polypeptide: MSKSTIEPKNKKSVNRGKEIAKDTILTPNFYTTDFEAMEKMDLSINEDELEAICEEFRKDYNRHHFVRNKEFEGAADKLDPETRELFVDFLEGSCTSEFSGFLLYKELSKRIKDKNPLLAECFAHMARDEARHAGFLNKSMNDFGLQLDLGFLTANKDYTYFPPRSIFYATYISEKIGYWRYIAIFRHLEKNPEGKIFPLFNFFENWCQDENRHGDFFDALMKAQPRSVKSLSNKITIGGSTFTHPLFDYFHRFRYFLNNHPFVSKLWSRFFLLAVFATMYIRDQGTKKDFYSALGLDAREYDQFVINKTNETSARVFPVVLNVFDDSFYRRLDSIVENGKRLSEIDKKDNQNLNKVLSKIPIFISNGYQLLRLYLLKPLDSKDYQPSIR.

Belongs to the AcsF family. The cofactor is Fe cation.

It carries out the reaction Mg-protoporphyrin IX 13-monomethyl ester + 3 NADPH + 3 O2 + 2 H(+) = 3,8-divinyl protochlorophyllide a + 3 NADP(+) + 5 H2O. Its pathway is porphyrin-containing compound metabolism; chlorophyll biosynthesis (light-independent). In terms of biological role, catalyzes the formation of the isocyclic ring in chlorophyll biosynthesis. Mediates the cyclase reaction, which results in the formation of divinylprotochlorophyllide (Pchlide) characteristic of all chlorophylls from magnesium-protoporphyrin IX 13-monomethyl ester (MgPMME). This Prochlorococcus marinus (strain MIT 9215) protein is Magnesium-protoporphyrin IX monomethyl ester [oxidative] cyclase.